We begin with the raw amino-acid sequence, 916 residues long: Protein translocase subunit SecA (916 aa).

ATP-binding positions include Gln-87, 105 to 109 (GEGKT), and Asp-512. The tract at residues 857-916 (QHAEAPSMEQAVAGEEEELPEGPAPVVPLEPVRNEQKIGRNEPCPCGSGKKYKHCHGQLD) is disordered. Zn(2+) is bound by residues Cys-900, Cys-902, Cys-911, and His-912. Over residues 906 to 916 (KKYKHCHGQLD) the composition is skewed to basic residues.

The protein belongs to the SecA family. Monomer and homodimer. Part of the essential Sec protein translocation apparatus which comprises SecA, SecYEG and auxiliary proteins SecDF-YajC and YidC. Zn(2+) is required as a cofactor.

The protein localises to the cell inner membrane. It is found in the cytoplasm. It catalyses the reaction ATP + H2O + cellular proteinSide 1 = ADP + phosphate + cellular proteinSide 2.. In terms of biological role, part of the Sec protein translocase complex. Interacts with the SecYEG preprotein conducting channel. Has a central role in coupling the hydrolysis of ATP to the transfer of proteins into and across the cell membrane, serving both as a receptor for the preprotein-SecB complex and as an ATP-driven molecular motor driving the stepwise translocation of polypeptide chains across the membrane. This is Protein translocase subunit SecA from Pseudomonas aeruginosa (strain UCBPP-PA14).